We begin with the raw amino-acid sequence, 298 residues long: Putative S-adenosyl-L-methionine-dependent methyltransferase MAV_0778 (298 aa).

Residues D124 and 153–154 contribute to the S-adenosyl-L-methionine site; that span reads DL.

Belongs to the UPF0677 family.

Functionally, exhibits S-adenosyl-L-methionine-dependent methyltransferase activity. The protein is Putative S-adenosyl-L-methionine-dependent methyltransferase MAV_0778 of Mycobacterium avium (strain 104).